The sequence spans 130 residues: Small ribosomal subunit protein uS8 (130 aa).

This sequence belongs to the universal ribosomal protein uS8 family. As to quaternary structure, part of the 30S ribosomal subunit.

Its function is as follows. One of the primary rRNA binding proteins, it binds directly to 16S rRNA central domain where it helps coordinate assembly of the platform of the 30S subunit. In Thermococcus gammatolerans (strain DSM 15229 / JCM 11827 / EJ3), this protein is Small ribosomal subunit protein uS8.